The sequence spans 419 residues: Dimethylallyltryptophan synthase 1 (419 aa).

L-tryptophan-binding residues include phenylalanine 81, methionine 82, and glutamate 90. An L-tyrosine-binding site is contributed by phenylalanine 81. (2E)-geranyl diphosphate contacts are provided by arginine 105, lysine 187, tyrosine 189, arginine 251, lysine 253, and tyrosine 255. Dimethylallyl diphosphate contacts are provided by arginine 105, lysine 187, tyrosine 189, arginine 251, lysine 253, and tyrosine 255. Position 257 (arginine 257) interacts with L-tryptophan. Arginine 257 contacts L-tyrosine. 2 residues coordinate (2E)-geranyl diphosphate: lysine 332 and tyrosine 334. Positions 332 and 334 each coordinate dimethylallyl diphosphate. Residue tyrosine 389 participates in L-tryptophan binding. Tyrosine 389 contacts L-tyrosine. Tyrosine 404 is a binding site for (2E)-geranyl diphosphate.

The protein belongs to the tryptophan dimethylallyltransferase family.

The catalysed reaction is L-tyrosine + dimethylallyl diphosphate = 4-O-dimethylallyl-L-tyrosine + diphosphate. In terms of biological role, dimethylallyltryptophan synthase; part of the DMATS1 gene cluster that mediates the biosynthesis of a reversely N-prenylated monomeric L-tryptophan (r-N-DMAT). DMATS1 catalyzes the reverse N-prenylation of L-Trp with DMAPP to yield N-dimethylallyl-L-tryptophan. DMATS1 exhibits unusually broad substrate specificity and can utilize geranyl diphosphate (GPP) or L-Tyr as an alternative prenyl donor or acceptor, respectively. Is able to catalyze both forward and reverse prenylation, i.e., at C1 or C3 of DMAPP; and it can catalyze C-N and C-O bond-forming reactions. The main product of the cluster is the reverse-N-dimethylallyl-L-tryptophan (r-N-DMAT) produced by the dimethylallyltryptophan synthase DMATS1 and it remains unclear whether this metabolite undergoes further modifications when silent gene clusters are activated. The acetylated form of r-N-DMAT, ac-r-N-DMAT, is also produced. The roles of the cytochrome P450 monooxygenase FFUJ_09176 and the methyltransferase FFUJ_09178 have still to be elucidated. This is Dimethylallyltryptophan synthase 1 from Gibberella fujikuroi (strain CBS 195.34 / IMI 58289 / NRRL A-6831) (Bakanae and foot rot disease fungus).